Reading from the N-terminus, the 59-residue chain is Large ribosomal subunit protein uL30 (59 aa).

This sequence belongs to the universal ribosomal protein uL30 family. As to quaternary structure, part of the 50S ribosomal subunit.

This is Large ribosomal subunit protein uL30 from Psychrobacter sp. (strain PRwf-1).